A 570-amino-acid polypeptide reads, in one-letter code: Double-stranded RNA-binding protein Staufen homolog 2 (570 aa).

Residues 8 to 75 (TAMCLVNELA…ANKALTESTL (68 aa)) enclose the DRBM 1 domain. Disordered stretches follow at residues 71 to 94 (TESTLPKPVQKPPKSNVNNNPGSI) and 181 to 203 (NEPIPERSPQNGESGKDVDDDKD). Positions 83–94 (PKSNVNNNPGSI) are enriched in polar residues. Positions 95-181 (TPTVELNGLA…AMKALQALQN (87 aa)) constitute a DRBM 2 domain. S188 is subject to Phosphoserine. Residues 194–203 (SGKDVDDDKD) show a composition bias toward basic and acidic residues. 2 consecutive DRBM domains span residues 207 to 274 (SEIS…ELKK) and 307 to 375 (NPIS…QLGY). 2 short sequence motifs (nuclear localization signal) span residues 273-291 (KKLPPLPVVEKPKLFFKKR) and 373-412 (LGYKASTNLQDQLEKTGENKGWSGPKPGFPEPTNNTPKGI). Residues 381–570 (LQDQLEKTGE…QDCKKSNSAV (190 aa)) are required for dendritic transport. The tract at residues 387 to 409 (KTGENKGWSGPKPGFPEPTNNTP) is disordered. S395 is subject to Phosphoserine. T405 carries the phosphothreonine modification. A phosphoserine mark is found at S416, S426, S440, S455, and S492. Residues 528–570 (DGAMNIEKGSLEKQAKHLREKADNNQAPPGSIAQDCKKSNSAV) are disordered. Residues 536–550 (GSLEKQAKHLREKAD) show a composition bias toward basic and acidic residues.

In terms of assembly, interacts with the exportin XPO5. This requires RNA and RAN bound to GTP. Interacts with microtubules. Isoform 2 and isoform 3 may also interact with ribosomes, and this association is independent of translation. Identified in a mRNP complex, at least composed of DHX9, DDX3X, ELAVL1, HNRNPU, IGF2BP1, ILF3, PABPC1, PCBP2, PTBP2, STAU1, STAU2, SYNCRIP and YBX1. Interacts with TRIM71 (via NHL repeats) in an RNA-dependent manner.

The protein resides in the cytoplasm. It is found in the nucleus. It localises to the nucleolus. The protein localises to the endoplasmic reticulum. RNA-binding protein required for the microtubule-dependent transport of neuronal RNA from the cell body to the dendrite. As protein synthesis occurs within the dendrite, the localization of specific mRNAs to dendrites may be a prerequisite for neurite outgrowth and plasticity at sites distant from the cell body. The polypeptide is Double-stranded RNA-binding protein Staufen homolog 2 (STAU2) (Homo sapiens (Human)).